A 128-amino-acid polypeptide reads, in one-letter code: Holo-[acyl-carrier-protein] synthase (128 aa).

Residues D8 and E58 each coordinate Mg(2+).

The protein belongs to the P-Pant transferase superfamily. AcpS family. It depends on Mg(2+) as a cofactor.

It localises to the cytoplasm. It carries out the reaction apo-[ACP] + CoA = holo-[ACP] + adenosine 3',5'-bisphosphate + H(+). Transfers the 4'-phosphopantetheine moiety from coenzyme A to a Ser of acyl-carrier-protein. The protein is Holo-[acyl-carrier-protein] synthase of Alkalilimnicola ehrlichii (strain ATCC BAA-1101 / DSM 17681 / MLHE-1).